Here is a 118-residue protein sequence, read N- to C-terminus: UPF0102 protein NE0719 (118 aa).

It belongs to the UPF0102 family.

This Nitrosomonas europaea (strain ATCC 19718 / CIP 103999 / KCTC 2705 / NBRC 14298) protein is UPF0102 protein NE0719.